Consider the following 427-residue polypeptide: Lipophilic envelope-spanning tunnel protein A (427 aa).

Topologically, residues 1 to 75 (MALNTPQITP…LTRLAAMAFT (75 aa)) are cytoplasmic. Residues 76–96 (MLLLMPFAWGEPLLHIWLLGI) traverse the membrane as a helical segment. Topologically, residues 97–120 (RIDANVMQGIWQMTKQGDAITGSM) are periplasmic. The chain crosses the membrane as a helical span at residues 121 to 141 (VFFCVIGAPLILVTSIAYLWF). The Cytoplasmic segment spans residues 142 to 269 (GNRLGMNLRP…RHSLQKCWAA (128 aa)). A helical membrane pass occupies residues 270-290 (LLASIVLLLPANLLPISIIYL). Topologically, residues 291-310 (NGGRQEDTILSGIMSLASSN) are periplasmic. The chain crosses the membrane as a helical span at residues 311-331 (IAVAGIVFIASILVPFTKVIV). Residues 332-350 (MFTLLLSIHFKCQQGLRTR) lie on the Cytoplasmic side of the membrane. A helical transmembrane segment spans residues 351 to 371 (ILLLRMVTWIGRWSMLDLFVI). The Periplasmic portion of the chain corresponds to 372–382 (SLTMSLINRDQ). Residues 383 to 403 (ILAFTMGPAAFYFGAAVILTI) traverse the membrane as a helical segment. Residues 404-427 (LAVEWLDSRLLWDAHESGNARFDD) lie on the Cytoplasmic side of the membrane.

The protein belongs to the PqiA family. As to quaternary structure, may interact with LetB in the inner membrane.

It is found in the cell inner membrane. Its function is as follows. Could be part, together with LetB, of a system that transports lipids between the inner membrane and the outer membrane. Contributes to membrane integrity. This is Lipophilic envelope-spanning tunnel protein A from Escherichia coli (strain K12).